The following is a 309-amino-acid chain: Aspartate carbamoyltransferase catalytic subunit (309 aa).

Carbamoyl phosphate contacts are provided by Arg57 and Thr58. Lys86 is an L-aspartate binding site. Positions 107, 135, and 138 each coordinate carbamoyl phosphate. Residues Arg168 and Arg229 each contribute to the L-aspartate site. Leu269 and Pro270 together coordinate carbamoyl phosphate.

This sequence belongs to the aspartate/ornithine carbamoyltransferase superfamily. ATCase family. As to quaternary structure, heterooligomer of catalytic and regulatory chains.

The catalysed reaction is carbamoyl phosphate + L-aspartate = N-carbamoyl-L-aspartate + phosphate + H(+). The protein operates within pyrimidine metabolism; UMP biosynthesis via de novo pathway; (S)-dihydroorotate from bicarbonate: step 2/3. Catalyzes the condensation of carbamoyl phosphate and aspartate to form carbamoyl aspartate and inorganic phosphate, the committed step in the de novo pyrimidine nucleotide biosynthesis pathway. This is Aspartate carbamoyltransferase catalytic subunit from Methanopyrus kandleri (strain AV19 / DSM 6324 / JCM 9639 / NBRC 100938).